The primary structure comprises 314 residues: Methionyl-tRNA formyltransferase (314 aa).

(6S)-5,6,7,8-tetrahydrofolate is bound at residue 112–115 (SLLP).

Belongs to the Fmt family.

It carries out the reaction L-methionyl-tRNA(fMet) + (6R)-10-formyltetrahydrofolate = N-formyl-L-methionyl-tRNA(fMet) + (6S)-5,6,7,8-tetrahydrofolate + H(+). In terms of biological role, attaches a formyl group to the free amino group of methionyl-tRNA(fMet). The formyl group appears to play a dual role in the initiator identity of N-formylmethionyl-tRNA by promoting its recognition by IF2 and preventing the misappropriation of this tRNA by the elongation apparatus. This chain is Methionyl-tRNA formyltransferase, found in Aeromonas salmonicida (strain A449).